A 70-amino-acid polypeptide reads, in one-letter code: MKPGIHPKYAIITANCTCGNVIKVNSTAGKDLHLDVCGACHPFYTGTQKVVDTGGRIDKFNKRFAVLAKK.

Zn(2+) is bound by residues Cys-16, Cys-18, Cys-37, and Cys-40.

The protein belongs to the bacterial ribosomal protein bL31 family. Type A subfamily. Part of the 50S ribosomal subunit. The cofactor is Zn(2+).

Its function is as follows. Binds the 23S rRNA. The chain is Large ribosomal subunit protein bL31 from Shewanella baltica (strain OS223).